The sequence spans 105 residues: Secreted effector protein PINE1 (105 aa).

Positions 1–21 (MKLSQPLSIFAILAASTVAVA) are cleaved as a signal peptide.

In terms of assembly, interacts with Arabidopsis thaliana PGIP1.

The protein resides in the secreted. Its function is as follows. Effector protein required for full virulence. Directly interacts with and functionally inactivates PG-inhibiting proteins (PGIPs). PGIPs are a defense mechanism of infected plants, that inhibit the plant pathogens secreted polygalacturonases (PGs) used to degrade the plant cell wall. Excerts its function by interacting with host PGIPs to negate their polygalacturonase-inhibiting function via enhanced dissociation of PGIPs from PGs. This Sclerotinia sclerotiorum (strain ATCC 18683 / 1980 / Ss-1) (White mold) protein is Secreted effector protein PINE1.